Reading from the N-terminus, the 109-residue chain is Iron-sulfur assembly protein IscA-like 3, mitochondrial (109 aa).

The transit peptide at 1-18 (MRKQVLALSDTAAARIRQ) directs the protein to the mitochondrion. Fe cation-binding residues include C37, C100, and C102.

Belongs to the HesB/IscA family. Homodimer; may form tetramers and higher multimers. It depends on Fe cation as a cofactor.

The protein resides in the mitochondrion. Functionally, involved in the assembly of mitochondrial iron-sulfur proteins. Probably involved in the binding of an intermediate of Fe/S cluster assembly. This is Iron-sulfur assembly protein IscA-like 3, mitochondrial from Arabidopsis thaliana (Mouse-ear cress).